We begin with the raw amino-acid sequence, 120 residues long: V-type proton ATPase subunit F (120 aa).

The protein belongs to the V-ATPase F subunit family. As to quaternary structure, V-ATPase is a heteromultimeric enzyme composed of a peripheral catalytic V1 complex (components A to H) attached to an integral membrane V0 proton pore complex (components: a, c, c', c'', d, e, f and VOA1).

It localises to the vacuole membrane. In terms of biological role, subunit of the V1 complex of vacuolar(H+)-ATPase (V-ATPase), a multisubunit enzyme composed of a peripheral complex (V1) that hydrolyzes ATP and a membrane integral complex (V0) that translocates protons. V-ATPase is responsible for acidifying and maintaining the pH of intracellular compartments. The chain is V-type proton ATPase subunit F from Schizosaccharomyces pombe (strain 972 / ATCC 24843) (Fission yeast).